Here is a 513-residue protein sequence, read N- to C-terminus: Probable metalloreductase AIM14 (513 aa).

7 helical membrane passes run 22 to 42, 66 to 86, 103 to 123, 138 to 158, 166 to 186, 193 to 213, and 219 to 239; these read GYII…AHFL, PFWV…FTNV, LAFC…LLGQ, LIIL…TIHH, WANL…IVSS, FYSY…LLMI, and GVSD…ASRV. The 112-residue stretch at 100 to 211 folds into the Ferric oxidoreductase domain; sequence LGRLAFCLVP…NFTVALFVLL (112 aa). The FAD-binding FR-type domain occupies 240-368; it reads YNGYSVPGLT…GIPLYEYFDN (129 aa).

The protein belongs to the ferric reductase (FRE) family. AIM14 subfamily.

The protein localises to the membrane. Functionally, probable cell surface metalloreductase. May be involved in iron or copper homeostasis. The protein is Probable metalloreductase AIM14 (AIM14) of Clavispora lusitaniae (strain ATCC 42720) (Yeast).